The primary structure comprises 306 residues: MALRVVTRALGSLSLTPRIAAVPGPSLLPAAQVTNNVLLQLPSASMLLPSRPLLTSVALSAKFVSWKSRTKYTTMPVKMRKSGGRNHTGRIQVHGIGGGHKQRYRMIDFLRFRPEQESKPGPFEEKVIVVRYDPCRSADIALVAGGNRKRWIIATENMKAGDTILNSDHIGRMAVAAREGDAHPLGALPVGTLINNVESEPGRGAQYIRAAGTCGVLLRKVNGTAIIQLPSKRQMQVLETCTATVGRVSNVDHNKRVIGKAGRNRWLGKRPNSGRWHRKGGWAGRKIRPLPPMKSYVKLPSAAAQN.

The N-terminal 60 residues, 1-60, are a transit peptide targeting the mitochondrion; the sequence is MALRVVTRALGSLSLTPRIAAVPGPSLLPAAQVTNNVLLQLPSASMLLPSRPLLTSVALS.

The protein belongs to the universal ribosomal protein uL2 family. Component of the mitochondrial ribosome large subunit (39S) which comprises a 16S rRNA and about 50 distinct proteins.

The protein resides in the mitochondrion. This is Large ribosomal subunit protein uL2m (MRPL2) from Bos taurus (Bovine).